A 187-amino-acid chain; its full sequence is ATP synthase subunit delta (187 aa).

The protein belongs to the ATPase delta chain family. In terms of assembly, F-type ATPases have 2 components, F(1) - the catalytic core - and F(0) - the membrane proton channel. F(1) has five subunits: alpha(3), beta(3), gamma(1), delta(1), epsilon(1). F(0) has three main subunits: a(1), b(2) and c(10-14). The alpha and beta chains form an alternating ring which encloses part of the gamma chain. F(1) is attached to F(0) by a central stalk formed by the gamma and epsilon chains, while a peripheral stalk is formed by the delta and b chains.

It is found in the cell membrane. F(1)F(0) ATP synthase produces ATP from ADP in the presence of a proton or sodium gradient. F-type ATPases consist of two structural domains, F(1) containing the extramembraneous catalytic core and F(0) containing the membrane proton channel, linked together by a central stalk and a peripheral stalk. During catalysis, ATP synthesis in the catalytic domain of F(1) is coupled via a rotary mechanism of the central stalk subunits to proton translocation. In terms of biological role, this protein is part of the stalk that links CF(0) to CF(1). It either transmits conformational changes from CF(0) to CF(1) or is implicated in proton conduction. This Mesomycoplasma hyopneumoniae (strain 232) (Mycoplasma hyopneumoniae) protein is ATP synthase subunit delta.